Reading from the N-terminus, the 166-residue chain is Small ribosomal subunit protein cS23z (166 aa).

The protein belongs to the chloroplast-specific ribosomal protein cS23 family. Part of the 30S ribosomal subunit.

The protein resides in the plastid. The protein localises to the chloroplast. Component of the chloroplast ribosome (chloro-ribosome), a dedicated translation machinery responsible for the synthesis of chloroplast genome-encoded proteins, including proteins of the transcription and translation machinery and components of the photosynthetic apparatus. This is Small ribosomal subunit protein cS23z from Arabidopsis thaliana (Mouse-ear cress).